The sequence spans 400 residues: 1-deoxy-D-xylulose 5-phosphate reductoisomerase (400 aa).

Residues Thr-17, Gly-18, Ser-19, Ile-20, and Asn-131 each coordinate NADPH. Residue Lys-132 coordinates 1-deoxy-D-xylulose 5-phosphate. Glu-133 contributes to the NADPH binding site. Asp-157 lines the Mn(2+) pocket. Residues Ser-158, Glu-159, Ser-188, and His-211 each contribute to the 1-deoxy-D-xylulose 5-phosphate site. Glu-159 contributes to the Mn(2+) binding site. Gly-217 contacts NADPH. 1-deoxy-D-xylulose 5-phosphate-binding residues include Ser-224, Asn-229, Lys-230, and Glu-233. Glu-233 lines the Mn(2+) pocket.

This sequence belongs to the DXR family. Mg(2+) is required as a cofactor. Mn(2+) serves as cofactor.

It catalyses the reaction 2-C-methyl-D-erythritol 4-phosphate + NADP(+) = 1-deoxy-D-xylulose 5-phosphate + NADPH + H(+). It participates in isoprenoid biosynthesis; isopentenyl diphosphate biosynthesis via DXP pathway; isopentenyl diphosphate from 1-deoxy-D-xylulose 5-phosphate: step 1/6. Functionally, catalyzes the NADPH-dependent rearrangement and reduction of 1-deoxy-D-xylulose-5-phosphate (DXP) to 2-C-methyl-D-erythritol 4-phosphate (MEP). This is 1-deoxy-D-xylulose 5-phosphate reductoisomerase from Pseudomonas putida (strain ATCC 700007 / DSM 6899 / JCM 31910 / BCRC 17059 / LMG 24140 / F1).